Consider the following 189-residue polypeptide: Tumor protein p53-inducible protein 11 (189 aa).

Topologically, residues 1 to 63 (MAAKQPPPLM…FAVREPLGLR (63 aa)) are cytoplasmic. Phosphoserine is present on Ser14. The helical transmembrane segment at 64-84 (VWQFLSAMLFSSVAIMALALP) threads the bilayer. The Extracellular portion of the chain corresponds to 85–108 (DQLYDAVFDGAEVTSKTPIRLYGG). Residues 109-129 (ALLSISLIMWNALYTAEKVII) traverse the membrane as a helical segment. Residue Arg130 is a topological domain, cytoplasmic. Residues 131–151 (WTLLTEACYFGVQSLVVTATL) form a helical membrane-spanning segment. Topologically, residues 152–155 (AETG) are extracellular. A helical transmembrane segment spans residues 156–176 (LMSLGTLLLLASRLLFVIVSI). The Cytoplasmic segment spans residues 177–189 (YYYYQVGRKPKKV).

It localises to the membrane. This chain is Tumor protein p53-inducible protein 11 (Tp53i11), found in Rattus norvegicus (Rat).